The primary structure comprises 163 residues: 6,7-dimethyl-8-ribityllumazine synthase (163 aa).

5-amino-6-(D-ribitylamino)uracil-binding positions include phenylalanine 22, 56-58, and 80-82; these read TFE and AVI. 85-86 contacts (2S)-2-hydroxy-3-oxobutyl phosphate; that stretch reads GT. The Proton donor role is filled by histidine 88. A 5-amino-6-(D-ribitylamino)uracil-binding site is contributed by methionine 113. Arginine 127 contacts (2S)-2-hydroxy-3-oxobutyl phosphate.

This sequence belongs to the DMRL synthase family.

It carries out the reaction (2S)-2-hydroxy-3-oxobutyl phosphate + 5-amino-6-(D-ribitylamino)uracil = 6,7-dimethyl-8-(1-D-ribityl)lumazine + phosphate + 2 H2O + H(+). It participates in cofactor biosynthesis; riboflavin biosynthesis; riboflavin from 2-hydroxy-3-oxobutyl phosphate and 5-amino-6-(D-ribitylamino)uracil: step 1/2. Functionally, catalyzes the formation of 6,7-dimethyl-8-ribityllumazine by condensation of 5-amino-6-(D-ribitylamino)uracil with 3,4-dihydroxy-2-butanone 4-phosphate. This is the penultimate step in the biosynthesis of riboflavin. The protein is 6,7-dimethyl-8-ribityllumazine synthase of Anaeromyxobacter sp. (strain Fw109-5).